A 208-amino-acid polypeptide reads, in one-letter code: V-type ATP synthase subunit E (208 aa).

The protein belongs to the V-ATPase E subunit family.

Produces ATP from ADP in the presence of a proton gradient across the membrane. The chain is V-type ATP synthase subunit E from Chlamydia felis (strain Fe/C-56) (Chlamydophila felis).